Reading from the N-terminus, the 558-residue chain is C4b-binding protein alpha chain (558 aa).

The signal sequence occupies residues 1–13 (MSLTAALWVAVFG). Sushi domains lie at 14–74 (KCGP…ACVK), 75–136 (KSCR…ECVI), 137–201 (AKCG…TCER), 202–260 (IICP…VCEL), 261–326 (NSCT…GCKE), 327–388 (ICCP…SCHQ), 389–445 (SCDF…QCKA), and 446–503 (LCRK…RCEQ). Disulfide bonds link Cys15–Cys60, Cys45–Cys72, Cys77–Cys118, Cys104–Cys134, Cys139–Cys182, Cys168–Cys199, Cys204–Cys246, Cys232–Cys258, Cys263–Cys312, Cys296–Cys324, Cys329–Cys373, Cys363–Cys386, Cys390–Cys431, Cys417–Cys443, Cys447–Cys488, and Cys474–Cys501. A glycan (N-linked (GlcNAc...) asparagine) is linked at Asn31. Residues Asn177 and Asn186 are each glycosylated (N-linked (GlcNAc...) asparagine). 2 N-linked (GlcNAc...) asparagine glycosylation sites follow: Asn469 and Asn491.

Disulfide-linked complex of alpha and beta chains.

It is found in the secreted. Its function is as follows. Controls the classical pathway of complement activation. It binds as a cofactor to C3b/C4b inactivator (C3bINA), which then hydrolyzes the complement fragment C4b. It also accelerates the degradation of the C4bC2a complex (C3 convertase) by dissociating the complement fragment C2a. Alpha chain binds C4b. It also interacts with anticoagulant protein S and with serum amyloid P component. The chain is C4b-binding protein alpha chain (C4bpa) from Rattus norvegicus (Rat).